The primary structure comprises 155 residues: Movement protein TGB3 (155 aa).

Topologically, residues 1 to 59 are cytoplasmic; it reads MAMPHPLECCCPQCLPSSESFPIYGEQEIPCSETQAETTPVEKTVRANVLTDILDDHYY. Residues 60–80 traverse the membrane as a helical segment; that stretch reads AILASLFIIALWLLYIYLSSI. The Lumenal segment spans residues 81 to 130; sequence PTETGPYFYQDLNSVKIYGIGATNPEVIAAIHHWQKYPFGESPMWGGLIS. An Involved in plasmodesmata targeting and virus cell-to-cell movement motif is present at residues 89-93; that stretch reads YQDLN. A helical membrane pass occupies residues 131–151; the sequence is VLSILLKPLTLVFALSFFLLL. Residues 150 to 155 form a required for attachment to the host plasmodesmata-associated membrane compartments region; sequence LLSSKR. Over 152–155 the chain is Cytoplasmic; it reads SSKR.

It belongs to the virgaviridae TGB3 movement protein family. As to quaternary structure, interacts with movement proteins TGB1 and TGB2. TGB1-TGB3-TGB2 complex formation is enhanced by ATP hydrolysis.

Its subcellular location is the host cell junction. It is found in the host plasmodesma. The protein resides in the host endoplasmic reticulum membrane. The protein localises to the host cytoplasm. It localises to the host cytoskeleton. In terms of biological role, participates in the transport of viral genome to neighboring plant cells directly through plasmodesmata, without any budding. TGBp2 and TGBp3 are necessary for intracellular delivery of TGBp1-containing vRNPs to plasmodesmata. Can gate plasmodesmata and increase their size exclusion limit. Induces host actin cytoskeleton network thickening, which probably plays a major role in virus cell-to-cell movement. The protein is Movement protein TGB3 of Hordeum vulgare (Barley).